We begin with the raw amino-acid sequence, 88 residues long: Small ribosomal subunit protein uS17 (88 aa).

Belongs to the universal ribosomal protein uS17 family. As to quaternary structure, part of the 30S ribosomal subunit.

Its function is as follows. One of the primary rRNA binding proteins, it binds specifically to the 5'-end of 16S ribosomal RNA. This Yersinia pseudotuberculosis serotype O:1b (strain IP 31758) protein is Small ribosomal subunit protein uS17.